Here is a 347-residue protein sequence, read N- to C-terminus: 4-hydroxy-2-oxovalerate aldolase 4 (347 aa).

Residues 9-259 (ITIVDTTLRD…DTGVDLFPLI (251 aa)) form the Pyruvate carboxyltransferase domain. Substrate-binding positions include 17–18 (RD), S171, and H198. D18 is a Mn(2+) binding site. Mn(2+)-binding residues include H198 and H200. Y289 is a substrate binding site.

This sequence belongs to the 4-hydroxy-2-oxovalerate aldolase family.

It carries out the reaction (S)-4-hydroxy-2-oxopentanoate = acetaldehyde + pyruvate. This Rhodococcus opacus (strain B4) protein is 4-hydroxy-2-oxovalerate aldolase 4.